A 287-amino-acid chain; its full sequence is Pantothenate synthetase (287 aa).

30-37 (MGNLHSGH) contacts ATP. The Proton donor role is filled by histidine 37. Glutamine 61 provides a ligand contact to (R)-pantoate. Residue glutamine 61 participates in beta-alanine binding. Residue 149–152 (GEKD) coordinates ATP. Residue glutamine 155 participates in (R)-pantoate binding. Residues valine 178 and 186–189 (LSSR) contribute to the ATP site.

Belongs to the pantothenate synthetase family. In terms of assembly, homodimer.

Its subcellular location is the cytoplasm. The catalysed reaction is (R)-pantoate + beta-alanine + ATP = (R)-pantothenate + AMP + diphosphate + H(+). It participates in cofactor biosynthesis; (R)-pantothenate biosynthesis; (R)-pantothenate from (R)-pantoate and beta-alanine: step 1/1. Catalyzes the condensation of pantoate with beta-alanine in an ATP-dependent reaction via a pantoyl-adenylate intermediate. The chain is Pantothenate synthetase from Pseudomonas putida (strain W619).